We begin with the raw amino-acid sequence, 122 residues long: Large ribosomal subunit protein uL14 (122 aa).

It belongs to the universal ribosomal protein uL14 family. In terms of assembly, part of the 50S ribosomal subunit. Forms a cluster with proteins L3 and L19. In the 70S ribosome, L14 and L19 interact and together make contacts with the 16S rRNA in bridges B5 and B8.

Binds to 23S rRNA. Forms part of two intersubunit bridges in the 70S ribosome. This Geobacter sulfurreducens (strain ATCC 51573 / DSM 12127 / PCA) protein is Large ribosomal subunit protein uL14.